The following is a 115-amino-acid chain: Large ribosomal subunit protein bL19 (115 aa).

The protein belongs to the bacterial ribosomal protein bL19 family.

In terms of biological role, this protein is located at the 30S-50S ribosomal subunit interface and may play a role in the structure and function of the aminoacyl-tRNA binding site. This Erwinia tasmaniensis (strain DSM 17950 / CFBP 7177 / CIP 109463 / NCPPB 4357 / Et1/99) protein is Large ribosomal subunit protein bL19.